The chain runs to 306 residues: Agmatinase (306 aa).

Positions 126, 149, 151, 153, 230, and 232 each coordinate Mn(2+).

This sequence belongs to the arginase family. Agmatinase subfamily. Requires Mn(2+) as cofactor.

It catalyses the reaction agmatine + H2O = urea + putrescine. It participates in amine and polyamine biosynthesis; putrescine biosynthesis via agmatine pathway; putrescine from agmatine: step 1/1. Its function is as follows. Catalyzes the formation of putrescine from agmatine. This chain is Agmatinase, found in Shigella boydii serotype 18 (strain CDC 3083-94 / BS512).